The sequence spans 187 residues: Adenylate kinase (187 aa).

An ATP-binding site is contributed by 12–17; it reads GAGKGT. Residues 32–61 are NMP; the sequence is STGDIFRANLAENTELGQKARQFMDAGDLV. Residues threonine 33, arginine 38, 59 to 61, 87 to 90, and glutamine 94 contribute to the AMP site; these read DLV and GYPR. The LID stretch occupies residues 128–134; sequence GRGRADD. Arginine 129 contacts ATP. Arginine 131 and arginine 142 together coordinate AMP. Residue arginine 170 coordinates ATP.

The protein belongs to the adenylate kinase family. In terms of assembly, monomer.

It localises to the cytoplasm. It catalyses the reaction AMP + ATP = 2 ADP. Its pathway is purine metabolism; AMP biosynthesis via salvage pathway; AMP from ADP: step 1/1. Functionally, catalyzes the reversible transfer of the terminal phosphate group between ATP and AMP. Plays an important role in cellular energy homeostasis and in adenine nucleotide metabolism. The polypeptide is Adenylate kinase (Leuconostoc mesenteroides subsp. mesenteroides (strain ATCC 8293 / DSM 20343 / BCRC 11652 / CCM 1803 / JCM 6124 / NCDO 523 / NBRC 100496 / NCIMB 8023 / NCTC 12954 / NRRL B-1118 / 37Y)).